The sequence spans 199 residues: Major capsid protein (199 aa).

Disordered regions lie at residues 1 to 21 (MNSVGRRNNRRRNGPRRARRV) and 33 to 52 (NRAGPKRRARRRTRGGGANL). Composition is skewed to basic residues over residues 7 to 21 (RNNRRRNGPRRARRV) and 36 to 46 (GPKRRARRRTR).

Belongs to the luteoviruses capsid protein family.

It localises to the virion. Functionally, major capsid protein. The chain is Major capsid protein from Avena byzantina (Oat).